We begin with the raw amino-acid sequence, 235 residues long: Small ribosomal subunit protein uS2 (235 aa).

Belongs to the universal ribosomal protein uS2 family.

This Anoxybacillus flavithermus (strain DSM 21510 / WK1) protein is Small ribosomal subunit protein uS2.